Here is a 298-residue protein sequence, read N- to C-terminus: ATP phosphoribosyltransferase (298 aa).

This sequence belongs to the ATP phosphoribosyltransferase family. Long subfamily. Requires Mg(2+) as cofactor.

The protein localises to the cytoplasm. It catalyses the reaction 1-(5-phospho-beta-D-ribosyl)-ATP + diphosphate = 5-phospho-alpha-D-ribose 1-diphosphate + ATP. It functions in the pathway amino-acid biosynthesis; L-histidine biosynthesis; L-histidine from 5-phospho-alpha-D-ribose 1-diphosphate: step 1/9. Its activity is regulated as follows. Feedback inhibited by histidine. Functionally, catalyzes the condensation of ATP and 5-phosphoribose 1-diphosphate to form N'-(5'-phosphoribosyl)-ATP (PR-ATP). Has a crucial role in the pathway because the rate of histidine biosynthesis seems to be controlled primarily by regulation of HisG enzymatic activity. The chain is ATP phosphoribosyltransferase from Aliivibrio fischeri (strain MJ11) (Vibrio fischeri).